The sequence spans 600 residues: Elongation factor 4 (600 aa).

A tr-type G domain is found at 5 to 187 (SHIRNFSIVA…ALVNRLPCPE (183 aa)). GTP contacts are provided by residues 17–22 (DHGKST) and 134–137 (NKID).

This sequence belongs to the TRAFAC class translation factor GTPase superfamily. Classic translation factor GTPase family. LepA subfamily.

The protein localises to the cell inner membrane. It carries out the reaction GTP + H2O = GDP + phosphate + H(+). In terms of biological role, required for accurate and efficient protein synthesis under certain stress conditions. May act as a fidelity factor of the translation reaction, by catalyzing a one-codon backward translocation of tRNAs on improperly translocated ribosomes. Back-translocation proceeds from a post-translocation (POST) complex to a pre-translocation (PRE) complex, thus giving elongation factor G a second chance to translocate the tRNAs correctly. Binds to ribosomes in a GTP-dependent manner. The protein is Elongation factor 4 of Paramagnetospirillum magneticum (strain ATCC 700264 / AMB-1) (Magnetospirillum magneticum).